The sequence spans 359 residues: Phosphoribosylformylglycinamidine cyclo-ligase (359 aa).

This sequence belongs to the AIR synthase family.

It is found in the cytoplasm. The enzyme catalyses 2-formamido-N(1)-(5-O-phospho-beta-D-ribosyl)acetamidine + ATP = 5-amino-1-(5-phospho-beta-D-ribosyl)imidazole + ADP + phosphate + H(+). It participates in purine metabolism; IMP biosynthesis via de novo pathway; 5-amino-1-(5-phospho-D-ribosyl)imidazole from N(2)-formyl-N(1)-(5-phospho-D-ribosyl)glycinamide: step 2/2. In Brucella melitensis biotype 2 (strain ATCC 23457), this protein is Phosphoribosylformylglycinamidine cyclo-ligase.